A 304-amino-acid chain; its full sequence is N-carbamoyl-D-amino acid hydrolase (304 aa).

The CN hydrolase domain maps to 5–276 (MILAVGQQGP…DEVITAAVDL (272 aa)). Catalysis depends on residues glutamate 47, lysine 127, and cysteine 172.

Homotetramer.

The catalysed reaction is an N-carbamoyl-D-amino acid + H2O + 2 H(+) = a D-alpha-amino acid + NH4(+) + CO2. Functionally, the enzyme catalyzes the hydrolysis of N-carbamoyl-D-amino acids to the corresponding which are useful intermediates in the preparation of beta-lactam antibiotics. Industrial production of beta-lactam antibiotics is now being developed using this enzyme. This Rhizobium radiobacter (Agrobacterium tumefaciens) protein is N-carbamoyl-D-amino acid hydrolase.